The sequence spans 196 residues: FMN-dependent NADH:quinone oxidoreductase (196 aa).

FMN contacts are provided by residues serine 10 and 17 to 19; that span reads SYS.

This sequence belongs to the azoreductase type 1 family. As to quaternary structure, homodimer. FMN is required as a cofactor.

The enzyme catalyses 2 a quinone + NADH + H(+) = 2 a 1,4-benzosemiquinone + NAD(+). It catalyses the reaction N,N-dimethyl-1,4-phenylenediamine + anthranilate + 2 NAD(+) = 2-(4-dimethylaminophenyl)diazenylbenzoate + 2 NADH + 2 H(+). Its function is as follows. Quinone reductase that provides resistance to thiol-specific stress caused by electrophilic quinones. Functionally, also exhibits azoreductase activity. Catalyzes the reductive cleavage of the azo bond in aromatic azo compounds to the corresponding amines. In Metamycoplasma arthritidis (strain 158L3-1) (Mycoplasma arthritidis), this protein is FMN-dependent NADH:quinone oxidoreductase.